A 385-amino-acid chain; its full sequence is MNIETTITRAWQRQAAWLWLLLPVSWLYSLLMILRRQAYKAGIFSSYRAPIPVMVIGNITVGGSGKTPLIIALVRHLQQQGIKVGVISRGYGGDSSQMPALVNTESVPNIVGDEPCLIVNMTGVAMAVCPNRQQAMTTLLASYPDLQLIIADDGLQHYALQRDIEWIVVDAARGFGNKQLLPTGFLREPMSRLKGANVVYHQKADSLSSTDDKYDDTCPPTKRLRMHLQPDNLERLWSFDTQSDGLATVKAMAPEKGSRVHAVSGIGYPQRFFDTLDTLGFQVSPHPYPDHHDFSLTELLRYTEHPIIVTSKDAVKIRALLMQETINQTNQTNQTLSDEYNELGSRLWVLPVTAVLSDGCYEILQQQLQTLNIAISSKEHERVIT.

Residue 60-67 (TVGGSGKT) coordinates ATP.

The protein belongs to the LpxK family.

The enzyme catalyses a lipid A disaccharide + ATP = a lipid IVA + ADP + H(+). Its pathway is glycolipid biosynthesis; lipid IV(A) biosynthesis; lipid IV(A) from (3R)-3-hydroxytetradecanoyl-[acyl-carrier-protein] and UDP-N-acetyl-alpha-D-glucosamine: step 6/6. In terms of biological role, transfers the gamma-phosphate of ATP to the 4'-position of a tetraacyldisaccharide 1-phosphate intermediate (termed DS-1-P) to form tetraacyldisaccharide 1,4'-bis-phosphate (lipid IVA). In Psychrobacter arcticus (strain DSM 17307 / VKM B-2377 / 273-4), this protein is Tetraacyldisaccharide 4'-kinase.